The chain runs to 44 residues: U9-ctenitoxin-Co1a (44 aa).

Disulfide bonds link Cys3-Cys17, Cys10-Cys23, Cys16-Cys33, and Cys25-Cys31.

In terms of tissue distribution, expressed by the venom gland.

It is found in the secreted. Its function is as follows. Insecticidal neurotoxin that reversibly inhibits the N-methyl-D-aspartate (NMDA)-subtype of ionotropic glutamate receptor (GRIN) and inhibits inactivation of insect sodium channels (Nav). In vivo, is highly toxic to insects. The polypeptide is U9-ctenitoxin-Co1a (Ctenus ornatus (Brazilian spider)).